Consider the following 666-residue polypeptide: Protein-arginine deiminase type-4 (666 aa).

Ca(2+) is bound by residues Asn153, Asp155, Asp165, Asp168, Asp176, and Asp179. Arg212 and Arg218 each carry citrulline. Gln349 lines the Ca(2+) pocket. Asp350 is an active-site residue. Ca(2+) is bound by residues Glu351, Glu353, Asp369, and Ser370. Arg372, Arg374, and Arg383 each carry citrulline. Arg374 serves as a coordination point for substrate. Positions 407, 410, and 411 each coordinate Ca(2+). Active-site residues include His471, Asp473, and Cys648.

The protein belongs to the protein arginine deiminase family. Requires Ca(2+) as cofactor. Post-translationally, autocitrullination at Arg-372 and Arg-374 inactivates the enzyme. Epidermis.

The protein localises to the cytoplasm. Its subcellular location is the nucleus. It is found in the cytoplasmic granule. The enzyme catalyses L-arginyl-[protein] + H2O = L-citrullyl-[protein] + NH4(+). Catalyzes the citrullination/deimination of arginine residues of proteins such as histones, thereby playing a key role in histone code and regulation of stem cell maintenance. Citrullinates histone H1 at 'Arg-54' (to form H1R54ci), histone H3 at 'Arg-2', 'Arg-8', 'Arg-17' and/or 'Arg-26' (to form H3R2ci, H3R8ci, H3R17ci, H3R26ci, respectively) and histone H4 at 'Arg-3' (to form H4R3ci). Acts as a key regulator of stem cell maintenance by mediating citrullination of histone H1: citrullination of 'Arg-54' of histone H1 (H1R54ci) results in H1 displacement from chromatin and global chromatin decondensation, thereby promoting pluripotency and stem cell maintenance. Promotes profound chromatin decondensation during the innate immune response to infection in neutrophils by mediating formation of H1R54ci. Required for the formation of neutrophil extracellular traps (NETs); NETs are mainly composed of DNA fibers and are released by neutrophils to bind pathogens during inflammation. Citrullination of histone H3 prevents their methylation by CARM1 and HRMT1L2/PRMT1 and represses transcription. Citrullinates EP300/P300 at 'Arg-2142', which favors its interaction with NCOA2/GRIP1. In Rattus norvegicus (Rat), this protein is Protein-arginine deiminase type-4 (Padi4).